A 397-amino-acid polypeptide reads, in one-letter code: 1-deoxy-D-xylulose 5-phosphate reductoisomerase (397 aa).

NADPH-binding residues include Ser-10, Gly-11, Ser-12, Ile-13, Ala-36, Arg-37, and Asn-124. Position 125 (Lys-125) interacts with 1-deoxy-D-xylulose 5-phosphate. NADPH is bound at residue Glu-126. Asp-150 is a Mn(2+) binding site. Residues Ser-151, Glu-152, Ser-186, and His-209 each coordinate 1-deoxy-D-xylulose 5-phosphate. Glu-152 contributes to the Mn(2+) binding site. An NADPH-binding site is contributed by Gly-215. 1-deoxy-D-xylulose 5-phosphate-binding residues include Ser-222, Asn-227, Lys-228, and Glu-231. Glu-231 provides a ligand contact to Mn(2+).

This sequence belongs to the DXR family. The cofactor is Mg(2+). Mn(2+) serves as cofactor.

The catalysed reaction is 2-C-methyl-D-erythritol 4-phosphate + NADP(+) = 1-deoxy-D-xylulose 5-phosphate + NADPH + H(+). Its pathway is isoprenoid biosynthesis; isopentenyl diphosphate biosynthesis via DXP pathway; isopentenyl diphosphate from 1-deoxy-D-xylulose 5-phosphate: step 1/6. Its function is as follows. Catalyzes the NADPH-dependent rearrangement and reduction of 1-deoxy-D-xylulose-5-phosphate (DXP) to 2-C-methyl-D-erythritol 4-phosphate (MEP). This Aeromonas hydrophila subsp. hydrophila (strain ATCC 7966 / DSM 30187 / BCRC 13018 / CCUG 14551 / JCM 1027 / KCTC 2358 / NCIMB 9240 / NCTC 8049) protein is 1-deoxy-D-xylulose 5-phosphate reductoisomerase.